The following is a 275-amino-acid chain: Nitrogenase iron protein 3 (275 aa).

Residue Gly9 to Ser16 participates in ATP binding. Cys97 contributes to the [4Fe-4S] cluster binding site. ADP-ribosylarginine; by dinitrogenase reductase ADP-ribosyltransferase is present on Arg100. Cys132 contributes to the [4Fe-4S] cluster binding site.

This sequence belongs to the NifH/BchL/ChlL family. Homodimer. [4Fe-4S] cluster is required as a cofactor. Post-translationally, the reversible ADP-ribosylation of Arg-100 inactivates the nitrogenase reductase and regulates nitrogenase activity.

The enzyme catalyses N2 + 8 reduced [2Fe-2S]-[ferredoxin] + 16 ATP + 16 H2O = H2 + 8 oxidized [2Fe-2S]-[ferredoxin] + 2 NH4(+) + 16 ADP + 16 phosphate + 6 H(+). Functionally, the key enzymatic reactions in nitrogen fixation are catalyzed by the nitrogenase complex, which has 2 components: the iron protein and the molybdenum-iron protein. The sequence is that of Nitrogenase iron protein 3 (nifH3) from Clostridium pasteurianum.